We begin with the raw amino-acid sequence, 353 residues long: Virulence plasmid protein pGP2-D (353 aa).

The protein is Virulence plasmid protein pGP2-D of Chlamydia muridarum (strain MoPn / Nigg).